The primary structure comprises 1013 residues: Hemoglobin-binding protein A (1013 aa).

The signal sequence occupies residues 1–24 (MTNFKFSLLACSIAFALNASTAYA). Repeat copies occupy residues 26-29 (QPTN), 30-33 (QPTN), 34-37 (QPTN), 38-41 (QPTN), 42-45 (QPTN), 46-49 (QPTN), 50-53 (QPTN), and 54-57 (QPTN). Positions 26 to 57 (QPTNQPTNQPTNQPTNQPTNQPTNQPTNQPTN) are 8 X 4 AA tandem repeats of Q-P-T-N. Over residues 26-58 (QPTNQPTNQPTNQPTNQPTNQPTNQPTNQPTNQ) the composition is skewed to low complexity. Residues 26–61 (QPTNQPTNQPTNQPTNQPTNQPTNQPTNQPTNQDSN) form a disordered region. The TonB box signature appears at 67–74 (EQINVSGS). A TBDR plug domain is found at 78 to 205 (SDSKTPPKIA…LGGSVIYKTK (128 aa)). The TBDR beta-barrel domain occupies 213-1013 (NKDYYVSYKK…NYKMSVQFEF (801 aa)). A TonB C-terminal box motif is present at residues 996-1013 (NRFYAPGRNYKMSVQFEF).

The protein belongs to the TonB-dependent receptor family. Hemoglobin/haptoglobin binding protein subfamily.

It localises to the cell outer membrane. Acts as a receptor for hemoglobin of the human host and is required for heme uptake. The polypeptide is Hemoglobin-binding protein A (hgbA) (Haemophilus influenzae).